The primary structure comprises 787 residues: (-)-kolavenyl diphosphate synthase, chloroplastic (787 aa).

A chloroplast-targeting transit peptide spans 1 to 47 (MSFATSLPRPTTTGAAGFGLPLATCISLSVSHSFSPKFGICNNTSLR). Lysine 237 is a substrate binding site. Positions 368 and 370 each coordinate Mg(2+). The DXDD motif signature appears at 368–371 (DSDD). Lysine 454 lines the substrate pocket.

The protein belongs to the terpene synthase family. Tpsc subfamily. Mg(2+) serves as cofactor. As to expression, expressed in peltate glandular trichomes of leaves. Highly expressed in the first leaf pair.

The protein localises to the plastid. Its subcellular location is the chloroplast. The enzyme catalyses (2E,6E,10E)-geranylgeranyl diphosphate = (-)-kolavenyl diphosphate. Its activity is regulated as follows. Inhibited by high concentrations of magnesium. In terms of biological role, involved in the biosynthesis of clerodane diterpenoids natural products, including salvinorin A with potent agonistic activity on brain kappa-opioid receptors, thus conferring hallucinogenic properties. Diterpene synthase that catalyzes the formation of (-)-kolavenyl diphosphate from geranylgeranyl diphosphate (GGPP) as the first reaction in salvinorin A biosynthesis. The protein is (-)-kolavenyl diphosphate synthase, chloroplastic of Salvia divinorum (Maria pastora).